A 280-amino-acid polypeptide reads, in one-letter code: MANFKGHALPGSFFLVFGLWWSVKYPLKYLNSKVKGNCRSNKCYERLELIEGILKAAFALIGILAEQFVPDGPHMHLVNGEDHSWVKLMNWQHTTMYLFYGISGVVDILTFLPLNLPRGLDRLSLGIAVIIEGLLFYYHVHNRPALDQHIHSLLLIAVFGGAISIMIEVFMRNDIVLELFRSSLTILQGTWFWQIGFVLYPLGGAPEWDQTDHGNVMFITMCFCWHYAVALLIMAINYSLVYCCVKRHKKLSSVVDNSLKKINSNKTEVEASLLAGSDEE.

7 helical membrane-spanning segments follow: residues 7–27, 49–69, 96–116, 120–140, 150–170, 184–204, and 216–236; these read HALP…KYPL, LIEG…EQFV, MYLF…PLNL, LDRL…YYHV, IHSL…IEVF, LTIL…PLGG, and VMFI…IMAI.

The protein belongs to the TMEM45 family.

The protein localises to the membrane. The protein is Transmembrane protein 45B (tmem45b) of Xenopus tropicalis (Western clawed frog).